Consider the following 515-residue polypeptide: Galactose/methyl galactoside import ATP-binding protein MglA (515 aa).

ABC transporter domains follow at residues 8–243 (LEMR…VGRE) and 254–499 (IPKE…AKYL). An ATP-binding site is contributed by 40-47 (GENGAGKS).

Belongs to the ABC transporter superfamily. Galactose/methyl galactoside importer (TC 3.A.1.2.3) family. The complex is composed of one ATP-binding protein (MglA), two transmembrane proteins (MglC) and a solute-binding protein (MglB).

The protein localises to the cell membrane. The catalysed reaction is D-galactose(out) + ATP + H2O = D-galactose(in) + ADP + phosphate + H(+). The enzyme catalyses methyl beta-D-galactoside(out) + ATP + H2O = methyl beta-D-galactoside(in) + ADP + phosphate + H(+). Part of the ABC transporter complex MglABC involved in galactose/methyl galactoside import. Responsible for energy coupling to the transport system. This Clostridium perfringens (strain ATCC 13124 / DSM 756 / JCM 1290 / NCIMB 6125 / NCTC 8237 / Type A) protein is Galactose/methyl galactoside import ATP-binding protein MglA.